A 273-amino-acid chain; its full sequence is Release factor glutamine methyltransferase (273 aa).

S-adenosyl-L-methionine-binding positions include 109–113, Asp-132, Trp-159, and Asn-176; that span reads GTGSG. Position 176 to 179 (176 to 179) interacts with substrate; the sequence is NPPY.

This sequence belongs to the protein N5-glutamine methyltransferase family. PrmC subfamily.

The enzyme catalyses L-glutaminyl-[peptide chain release factor] + S-adenosyl-L-methionine = N(5)-methyl-L-glutaminyl-[peptide chain release factor] + S-adenosyl-L-homocysteine + H(+). Functionally, methylates the class 1 translation termination release factors RF1/PrfA and RF2/PrfB on the glutamine residue of the universally conserved GGQ motif. The chain is Release factor glutamine methyltransferase from Neisseria gonorrhoeae (strain ATCC 700825 / FA 1090).